A 295-amino-acid chain; its full sequence is GTPase Era (295 aa).

The region spanning 5–172 (YCGYAAIIGR…EQAVHQLMPE (168 aa)) is the Era-type G domain. A G1 region spans residues 13 to 20 (GRPNVGKS). Residue 13–20 (GRPNVGKS) participates in GTP binding. A G2 region spans residues 39–43 (QTTRY). Positions 60 to 63 (DTPG) are G3. Residues 60–64 (DTPGL) and 121–124 (NKVD) contribute to the GTP site. Residues 121–124 (NKVD) are G4. Positions 151-153 (LSA) are G5. A KH type-2 domain is found at 203–279 (LGQEIPYSLA…FLQLWVKVKS (77 aa)).

The protein belongs to the TRAFAC class TrmE-Era-EngA-EngB-Septin-like GTPase superfamily. Era GTPase family. Monomer.

It is found in the cytoplasm. The protein localises to the cell inner membrane. Its function is as follows. An essential GTPase that binds both GDP and GTP, with rapid nucleotide exchange. Plays a role in 16S rRNA processing and 30S ribosomal subunit biogenesis and possibly also in cell cycle regulation and energy metabolism. The polypeptide is GTPase Era (Coxiella burnetii (strain CbuG_Q212) (Coxiella burnetii (strain Q212))).